Reading from the N-terminus, the 202-residue chain is Complement component C8 gamma chain (202 aa).

A signal peptide spans 1–23 (MVLRGRAVLLAVLLAAGSLGRWA). A disulfide bridge connects residues Cys96 and Cys188. Asn173 carries N-linked (GlcNAc...) asparagine glycosylation.

It belongs to the calycin superfamily. Lipocalin family. In terms of assembly, heterotrimer of 3 chains: alpha (C8A), beta (C8B) and gamma (C8G); the alpha and gamma chains are disulfide bonded. Component of the membrane attack complex (MAC), composed of complement C5b, C6, C7, C8A, C8B, C8G and multiple copies of the pore-forming subunit C9.

It localises to the secreted. Its subcellular location is the target cell membrane. Membrane attack complex (MAC) assembly is inhibited by CD59, thereby protecting self-cells from damage during complement activation. MAC assembly is also inhibited by clusterin (CLU) chaperones that inhibit polymerization of C9. Component of the membrane attack complex (MAC), a multiprotein complex activated by the complement cascade, which inserts into a target cell membrane and forms a pore, leading to target cell membrane rupture and cell lysis. The MAC is initiated by proteolytic cleavage of C5 into complement C5b in response to the classical, alternative, lectin and GZMK complement pathways. The complement pathways consist in a cascade of proteins that leads to phagocytosis and breakdown of pathogens and signaling that strengthens the adaptive immune system. C8G, together with C8A and C8B, inserts into the target membrane, but does not form pores by itself. During MAC assembly, associates with C5b, C6 and C7 to form the C5b8 intermediate complex that inserts into the target membrane and traverses the bilayer increasing membrane rigidity. The chain is Complement component C8 gamma chain (C8G) from Oryctolagus cuniculus (Rabbit).